Reading from the N-terminus, the 242-residue chain is Biosynthetic peptidoglycan transglycosylase (242 aa).

A helical transmembrane segment spans residues 12-31 (LLFWLMLASALLVLALRWLP).

The protein belongs to the glycosyltransferase 51 family.

Its subcellular location is the cell inner membrane. The enzyme catalyses [GlcNAc-(1-&gt;4)-Mur2Ac(oyl-L-Ala-gamma-D-Glu-L-Lys-D-Ala-D-Ala)](n)-di-trans,octa-cis-undecaprenyl diphosphate + beta-D-GlcNAc-(1-&gt;4)-Mur2Ac(oyl-L-Ala-gamma-D-Glu-L-Lys-D-Ala-D-Ala)-di-trans,octa-cis-undecaprenyl diphosphate = [GlcNAc-(1-&gt;4)-Mur2Ac(oyl-L-Ala-gamma-D-Glu-L-Lys-D-Ala-D-Ala)](n+1)-di-trans,octa-cis-undecaprenyl diphosphate + di-trans,octa-cis-undecaprenyl diphosphate + H(+). It functions in the pathway cell wall biogenesis; peptidoglycan biosynthesis. Peptidoglycan polymerase that catalyzes glycan chain elongation from lipid-linked precursors. The protein is Biosynthetic peptidoglycan transglycosylase of Ectopseudomonas mendocina (strain ymp) (Pseudomonas mendocina).